The primary structure comprises 172 residues: Envelope protein UL45 (172 aa).

The Intravirion portion of the chain corresponds to 1-27 (MAFRASGPAYQPLAPAASPARARVPAV). A helical; Signal-anchor for type II membrane protein membrane pass occupies residues 28–48 (AWIGVGAIVGAFALVAALVLV). Topologically, residues 49-172 (PPRSSWGLSP…TSIRNALGLP (124 aa)) are virion surface.

Belongs to the herpesviridae HHV-1 UL45 family.

The protein localises to the virion membrane. Functionally, important virulence factor of HSV neurotropism. Seems to be required for glycoprotein B-induced fusion. Dispensable for growth in vitro. This is Envelope protein UL45 from Homo sapiens (Human).